Here is a 147-residue protein sequence, read N- to C-terminus: MVHWSAEEKQLITSVWSKVNVEECGAEALARLLIVYPWTQRFFDNFGNLSSPTAIIGNPKVRAHGKKVLSSFGEAVKNLDNIKNTYAKLSELHCEKLHVDPENFRLLGNILIIVLAAHFTKDFTPTCQAVWQKLVSVVAHALAYKYH.

One can recognise a Globin domain in the interval 3–147; it reads HWSAEEKQLI…VAHALAYKYH (145 aa). Heme b contacts are provided by histidine 64 and histidine 93.

It belongs to the globin family.

Its function is as follows. The rho chain is the major early embryonic beta-type hemoglobin chain. The protein is Hemoglobin subunit rho of Gallus gallus (Chicken).